We begin with the raw amino-acid sequence, 56 residues long: Large ribosomal subunit protein bL32 (56 aa).

The disordered stretch occupies residues 1–38 (MAVQQNKKSRSKRGMRRSHDSLSTAQLSVDATSGELHR). The span at 7-16 (KKSRSKRGMR) shows a compositional bias: basic residues. The segment covering 21–31 (SLSTAQLSVDA) has biased composition (polar residues).

This sequence belongs to the bacterial ribosomal protein bL32 family.

The chain is Large ribosomal subunit protein bL32 from Shewanella woodyi (strain ATCC 51908 / MS32).